The primary structure comprises 556 residues: U-box domain-containing protein 38 (556 aa).

Positions 1 to 34 (MGKNGRLRWNPFSHRSSSSTSSSSRQQQQEQQPP) are disordered. The span at 13 to 32 (SHRSSSSTSSSSRQQQQEQQ) shows a compositional bias: low complexity. Residues 32–108 (QPPVEFLCPI…DTWCDTVGVS (77 aa)) form the U-box domain. ARM repeat units lie at residues 256–295 (DEARVSLCSPRILSLLKNMIVSRYSLVQTNALASLVNLSL), 297–336 (KKNKLTIVRLGFVPILIDVLKSGSREAQEHAAGTIFSLSL), 338–378 (DDNK…HLTL), 380–417 (QTNRSKLVRLGAVPALFSMVRSGESASRALLVICNLAC), and 418–468 (CSEG…ALSH).

In terms of assembly, binds to SD16, SD17, SD18 and SD129.

The enzyme catalyses S-ubiquitinyl-[E2 ubiquitin-conjugating enzyme]-L-cysteine + [acceptor protein]-L-lysine = [E2 ubiquitin-conjugating enzyme]-L-cysteine + N(6)-ubiquitinyl-[acceptor protein]-L-lysine.. Its pathway is protein modification; protein ubiquitination. In terms of biological role, functions as an E3 ubiquitin ligase. In Arabidopsis thaliana (Mouse-ear cress), this protein is U-box domain-containing protein 38 (PUB38).